Here is an 824-residue protein sequence, read N- to C-terminus: Leucine--tRNA ligase (824 aa).

Residues 42 to 52 (PYPSGHLHMGH) carry the 'HIGH' region motif. Positions 581–585 (KMSKS) match the 'KMSKS' region motif. Lys-584 contributes to the ATP binding site.

It belongs to the class-I aminoacyl-tRNA synthetase family.

The protein localises to the cytoplasm. It carries out the reaction tRNA(Leu) + L-leucine + ATP = L-leucyl-tRNA(Leu) + AMP + diphosphate. This chain is Leucine--tRNA ligase, found in Syntrophomonas wolfei subsp. wolfei (strain DSM 2245B / Goettingen).